A 270-amino-acid polypeptide reads, in one-letter code: tRNA pseudouridine synthase A (270 aa).

The active-site Nucleophile is D60. The interval 107–111 is RNA binding; it reads FHARF. Residue Y118 participates in substrate binding. The segment at 168-172 is interaction with tRNA; it reads QCQSR.

The protein belongs to the tRNA pseudouridine synthase TruA family. In terms of assembly, homodimer.

The catalysed reaction is uridine(38/39/40) in tRNA = pseudouridine(38/39/40) in tRNA. Its function is as follows. Formation of pseudouridine at positions 38, 39 and 40 in the anticodon stem and loop of transfer RNAs. This Shigella boydii serotype 18 (strain CDC 3083-94 / BS512) protein is tRNA pseudouridine synthase A.